The chain runs to 519 residues: Flavonoid 8-hydroxylase 2, chloroplastic (519 aa).

The N-terminal 46 residues, 1-46, are a transit peptide targeting the chloroplast; it reads MEVLQASSLSFQLLRRHSRNNLINKFRNPSLPRIHMPRQNIDLKTF. Residues 77-188 form the Rieske domain; it reads WYPVASVCDL…SCVRNGIVWF (112 aa). C119, H121, C139, and H142 together coordinate [2Fe-2S] cluster. Fe cation is bound by residues H241 and H246. The Redox-active motif motif lies at 447 to 450; sequence CSSC. 2 helical membrane-spanning segments follow: residues 462 to 478 and 485 to 501; these read IGLQAMSLVFVAMAAAV and YSMVAMAVLSFLASKWL.

[2Fe-2S] cluster is required as a cofactor. In terms of tissue distribution, glandular trichome-specific expression in leaves.

Its subcellular location is the plastid. It localises to the chloroplast membrane. The protein resides in the cytoplasm. It carries out the reaction salvigenin + 2 reduced [2Fe-2S]-[ferredoxin] + O2 + 2 H(+) = 8-hydroxysalvigenin + 2 oxidized [2Fe-2S]-[ferredoxin] + H2O. It functions in the pathway flavonoid metabolism. Its function is as follows. Rieske-type, PAO-family oxygenase involved in the biosynthesis of polymethoxylated flavonoids natural products such as nevadensin and salvigenin, aroma compounds which contribute to the flavor of sweet basil, and exhibit pharmacological activities such as anti-allergic, anti-oxidant, antibacterial, anti-proliferative, and anti-inflammatory effects. Catalyzes the hydroxylation of salvigenin to produce 8-hydroxysalvigenin (8-OH-SALV). The polypeptide is Flavonoid 8-hydroxylase 2, chloroplastic (Ocimum basilicum (Sweet basil)).